A 614-amino-acid chain; its full sequence is Probable zinc transporter protein DDB_G0269332 (614 aa).

Disordered stretches follow at residues 1-103 and 115-178; these read MSDI…LPHL and SSYN…NNEF. Topologically, residues 1–203 are cytoplasmic; the sequence is MSDINSNSYD…NLNRDSDAKK (203 aa). Positions 17-64 are enriched in low complexity; sequence QHQQESQYHPQQQQQQQQQQQQQQEYYNQQHQQESQYQQQSPPQQQYD. The segment covering 80-92 has biased composition (basic residues); sequence GHGRSHNSGHGHS. A compositionally biased stretch (low complexity) spans 121–176; the sequence is NNSGDISNSNNNNNNNNQYNYNNNNNNNNYNNNINNNQFNSSVYNNNNNNNNNNNN. Residues 204–224 form a helical membrane-spanning segment; sequence LAAWISVMLVFTIYEIFYGAY. At 225–233 the chain is on the extracellular side; the sequence is LESLGLVSD. A helical transmembrane segment spans residues 234–254; it reads GFHALFDCIGMGIALLAMLVG. The Cytoplasmic portion of the chain corresponds to 255–270; that stretch reads KRGISNQEYTYGYDRW. A helical membrane pass occupies residues 271 to 291; it reads EVLGTFSNGCFLLFVSFFLFL. Residues 292–306 are Extracellular-facing; the sequence is ESIERLLEPPHIHNH. A helical membrane pass occupies residues 307–327; sequence GRVMSLATISLIINIVGVLFF. The Cytoplasmic portion of the chain corresponds to 328 to 351; the sequence is KQKSNERKQQSSIRSENLLTISHH. A helical transmembrane segment spans residues 352 to 372; that stretch reads ILVDSCTSLGVILSSLVGQAF. The Extracellular portion of the chain corresponds to 373–377; sequence GLEIS. The helical transmembrane segment at 378–398 threads the bilayer; it reads DSLISIIIACIIVYNALPICI. Topologically, residues 399 to 614 are cytoplasmic; the sequence is KTSAILLQTT…NSSHSHAHNH (216 aa). The segment at 483 to 614 is disordered; the sequence is EGKHNSHSHG…NSSHSHAHNH (132 aa). 2 stretches are compositionally biased toward basic residues: residues 487–499 and 507–523; these read NSHSHGGAHHHPH and SHNHSHGHNHGHSHGHS. A compositionally biased stretch (basic and acidic residues) spans 525–535; sequence GGNDDHEHGEN. The segment covering 548-567 has biased composition (polar residues); the sequence is VQPTSPFSSHYTDIHSNNTP. Over residues 575-585 the composition is skewed to acidic residues; sequence QDDEDDEDDYD. Residues 586–599 show a composition bias toward basic and acidic residues; that stretch reads HDEHHHDHDHDEHH. A compositionally biased stretch (basic residues) spans 600–614; the sequence is HGHSHNSSHSHAHNH.

Belongs to the cation diffusion facilitator (CDF) transporter (TC 2.A.4) family. SLC30A subfamily.

Its subcellular location is the membrane. Its function is as follows. May be involved in zinc transport from the cytoplasm to either intracellular organelles or extracellular spaces. The sequence is that of Probable zinc transporter protein DDB_G0269332 from Dictyostelium discoideum (Social amoeba).